Reading from the N-terminus, the 378-residue chain is D-alanine--D-alanine ligase (378 aa).

One can recognise an ATP-grasp domain in the interval 149–374 (KVLLRAAGIP…FRTVVTDLIE (226 aa)). Position 189 to 247 (189 to 247 (EAGLQYPLFVKPSRAGSSFGVTKVEQIGDAAALAAAVFEASRHDWRVLVEQGIDAREIE)) interacts with ATP. The Mg(2+) site is built by aspartate 328, glutamate 341, and asparagine 343.

Belongs to the D-alanine--D-alanine ligase family. Mg(2+) is required as a cofactor. Requires Mn(2+) as cofactor.

The protein localises to the cytoplasm. The catalysed reaction is 2 D-alanine + ATP = D-alanyl-D-alanine + ADP + phosphate + H(+). The protein operates within cell wall biogenesis; peptidoglycan biosynthesis. In terms of biological role, cell wall formation. The chain is D-alanine--D-alanine ligase from Bifidobacterium animalis subsp. lactis (strain AD011).